Here is a 194-residue protein sequence, read N- to C-terminus: Endoribonuclease ToxN (194 aa).

Residues 114–182 adopt a coiled-coil conformation; that stretch reads MLKQYLFLKE…DQAKERDKAR (69 aa). Positions 171 to 182 are enriched in basic and acidic residues; sequence ERDQAKERDKAR. The disordered stretch occupies residues 171–194; the sequence is ERDQAKERDKARRIAYMRQMGRER.

This sequence belongs to the ToxN/AbiQ toxin family. In terms of assembly, one ToxN monomer binds to a 34-nt-long single repeat of the ToxI RNA; this complex forms a triangular heterohexameric complex with ToxN connected by the ToxI RNA to another toxin molecule. The ToxI repeats are cleavage products of their precursor. The ToxI repeat forms a pseudoknot which occludes the toxin active site.

Functionally, toxic component of a type III toxin-antitoxin (TA) system. An endoribonuclease which cleaves between the first and second A of AAAAA sequences; it tolerates other nucleotides in positions +2 and +4 of the consensus. Digests cognate antitoxin RNA ToxI as shown by the 2'-3'-cyclic phosphate at the 3' end of the 34-nt repeats and probably other RNAs. Inhibits growth when expressed in E.coli without causing cell lysis; this bacteriostatic effect is neutralized by cognate RNA antitoxin ToxI, which has 2.9 nearly identical 34 nucleotide-long repeats. Non-cognate antitoxin RNA from P.atrosepticum does not inhibit this toxin. The toxin-antitoxin pair function in plasmid maintenance (a plasmid addiction system), but unlike its P.atrosepticum homolog it is not seen to confer resistance to bacteriophages. This Bacillus thuringiensis subsp. kurstaki protein is Endoribonuclease ToxN.